A 152-amino-acid chain; its full sequence is UPF0756 membrane protein Moth_1009 (152 aa).

The next 4 membrane-spanning stretches (helical) occupy residues 5–25, 41–61, 75–95, and 117–137; these read LIILAVLVVAVLGRANTVALA, IFPFIEKGGTFWGLVLLIAAI, LGHVFLSWVGLSAFILSLITT, and LILGAVIAAAFLGGVPVGPFI.

The protein belongs to the UPF0756 family.

It localises to the cell membrane. The protein is UPF0756 membrane protein Moth_1009 of Moorella thermoacetica (strain ATCC 39073 / JCM 9320).